Reading from the N-terminus, the 760-residue chain is Xaa-Pro dipeptidyl-peptidase (760 aa).

Residues S349, D469, and H499 each act as charge relay system in the active site.

It belongs to the peptidase S15 family. As to quaternary structure, homodimer.

The protein localises to the cytoplasm. The enzyme catalyses Hydrolyzes Xaa-Pro-|- bonds to release unblocked, N-terminal dipeptides from substrates including Ala-Pro-|-p-nitroanilide and (sequentially) Tyr-Pro-|-Phe-Pro-|-Gly-Pro-|-Ile.. Functionally, removes N-terminal dipeptides sequentially from polypeptides having unsubstituted N-termini provided that the penultimate residue is proline. The polypeptide is Xaa-Pro dipeptidyl-peptidase (Streptococcus pyogenes serotype M28 (strain MGAS6180)).